Reading from the N-terminus, the 74-residue chain is Acyl carrier protein (74 aa).

The Carrier domain occupies 1–74 (MFEKVRKIIA…DVVEYIKNNS (74 aa)). An O-(pantetheine 4'-phosphoryl)serine modification is found at Ser34.

This sequence belongs to the acyl carrier protein (ACP) family. Post-translationally, 4'-phosphopantetheine is transferred from CoA to a specific serine of apo-ACP by AcpS. This modification is essential for activity because fatty acids are bound in thioester linkage to the sulfhydryl of the prosthetic group.

The protein localises to the cytoplasm. It participates in lipid metabolism; fatty acid biosynthesis. Its function is as follows. Carrier of the growing fatty acid chain in fatty acid biosynthesis. This Acetivibrio thermocellus (strain ATCC 27405 / DSM 1237 / JCM 9322 / NBRC 103400 / NCIMB 10682 / NRRL B-4536 / VPI 7372) (Clostridium thermocellum) protein is Acyl carrier protein.